Reading from the N-terminus, the 279-residue chain is Tryptophan synthase alpha chain (279 aa).

Catalysis depends on proton acceptor residues Glu63 and Asp74.

The protein belongs to the TrpA family. In terms of assembly, tetramer of two alpha and two beta chains.

It carries out the reaction (1S,2R)-1-C-(indol-3-yl)glycerol 3-phosphate + L-serine = D-glyceraldehyde 3-phosphate + L-tryptophan + H2O. It participates in amino-acid biosynthesis; L-tryptophan biosynthesis; L-tryptophan from chorismate: step 5/5. The alpha subunit is responsible for the aldol cleavage of indoleglycerol phosphate to indole and glyceraldehyde 3-phosphate. The polypeptide is Tryptophan synthase alpha chain (Prochlorococcus marinus subsp. pastoris (strain CCMP1986 / NIES-2087 / MED4)).